A 725-amino-acid chain; its full sequence is Ribosomal RNA large subunit methyltransferase K/L (725 aa).

One can recognise a THUMP domain in the interval 45–156 (SGYRACLWSR…RGRLSLGIDL (112 aa)).

Belongs to the methyltransferase superfamily. RlmKL family.

It localises to the cytoplasm. The enzyme catalyses guanosine(2445) in 23S rRNA + S-adenosyl-L-methionine = N(2)-methylguanosine(2445) in 23S rRNA + S-adenosyl-L-homocysteine + H(+). The catalysed reaction is guanosine(2069) in 23S rRNA + S-adenosyl-L-methionine = N(2)-methylguanosine(2069) in 23S rRNA + S-adenosyl-L-homocysteine + H(+). In terms of biological role, specifically methylates the guanine in position 2445 (m2G2445) and the guanine in position 2069 (m7G2069) of 23S rRNA. The sequence is that of Ribosomal RNA large subunit methyltransferase K/L from Marinobacter nauticus (strain ATCC 700491 / DSM 11845 / VT8) (Marinobacter aquaeolei).